The following is a 242-amino-acid chain: NAD(P)H-hydrate epimerase (242 aa).

The YjeF N-terminal domain occupies 11–221 (AKALDAELMS…KVITKKFNLS (211 aa)). Residue 61 to 65 (NNGGD) participates in (6S)-NADPHX binding. K(+) is bound by residues asparagine 62 and aspartate 128. Residues 132-138 (GFSFKGP) and aspartate 161 contribute to the (6S)-NADPHX site. K(+) is bound at residue serine 164.

It belongs to the NnrE/AIBP family. The cofactor is K(+).

It localises to the cytoplasm. It is found in the mitochondrion. Its subcellular location is the nucleus. It carries out the reaction (6R)-NADHX = (6S)-NADHX. It catalyses the reaction (6R)-NADPHX = (6S)-NADPHX. Functionally, catalyzes the epimerization of the S- and R-forms of NAD(P)HX, a damaged form of NAD(P)H that is a result of enzymatic or heat-dependent hydration. This is a prerequisite for the S-specific NAD(P)H-hydrate dehydratase to allow the repair of both epimers of NAD(P)HX. May have a role in meiosis. This is NAD(P)H-hydrate epimerase (mug182) from Schizosaccharomyces pombe (strain 972 / ATCC 24843) (Fission yeast).